The primary structure comprises 257 residues: Pyridoxine/pyridoxamine 5'-phosphate oxidase (257 aa).

33-36 (RIKY) is a binding site for substrate. 90–93 (RFVL) contributes to the FMN binding site. K95 contacts pyridoxal 5'-phosphate. Residues 105-106 (YT) and K112 contribute to the FMN site. Positions 152, 156, and 160 each coordinate pyridoxal 5'-phosphate. Residues 169–170 (QS) and W216 each bind FMN. Residue 222 to 224 (RLH) participates in substrate binding. R226 contributes to the FMN binding site.

Belongs to the pyridoxamine 5'-phosphate oxidase family. Homodimer. FMN serves as cofactor. As to expression, expressed in silk gland and fat body of the larva.

It catalyses the reaction pyridoxamine 5'-phosphate + O2 + H2O = pyridoxal 5'-phosphate + H2O2 + NH4(+). It carries out the reaction pyridoxine 5'-phosphate + O2 = pyridoxal 5'-phosphate + H2O2. It functions in the pathway cofactor metabolism; pyridoxal 5'-phosphate salvage; pyridoxal 5'-phosphate from pyridoxamine 5'-phosphate: step 1/1. The protein operates within cofactor metabolism; pyridoxal 5'-phosphate salvage; pyridoxal 5'-phosphate from pyridoxine 5'-phosphate: step 1/1. Catalyzes the oxidation of either pyridoxine 5'-phosphate (PNP) or pyridoxamine 5'-phosphate (PMP) into pyridoxal 5'-phosphate (PLP). This is Pyridoxine/pyridoxamine 5'-phosphate oxidase from Bombyx mori (Silk moth).